We begin with the raw amino-acid sequence, 122 residues long: Large ribosomal subunit protein uL14 (122 aa).

This sequence belongs to the universal ribosomal protein uL14 family. As to quaternary structure, part of the 50S ribosomal subunit. Forms a cluster with proteins L3 and L19. In the 70S ribosome, L14 and L19 interact and together make contacts with the 16S rRNA in bridges B5 and B8.

Its function is as follows. Binds to 23S rRNA. Forms part of two intersubunit bridges in the 70S ribosome. The chain is Large ribosomal subunit protein uL14 from Bacillus licheniformis (strain ATCC 14580 / DSM 13 / JCM 2505 / CCUG 7422 / NBRC 12200 / NCIMB 9375 / NCTC 10341 / NRRL NRS-1264 / Gibson 46).